A 1176-amino-acid chain; its full sequence is Surface-layer 125 kDa protein (1176 aa).

The N-terminal stretch at 1-30 (MAKQNKGRKFFAASATAALVASAIVPVASA) is a signal peptide. 3 SLH domains span residues 31–88 (AQLN…LEAE), 89–152 (GDVN…DLSE), and 153–216 (FADA…PKVD).

It localises to the secreted. The protein resides in the cell wall. It is found in the S-layer. Functionally, the S-layer is a paracrystalline mono-layered assembly of proteins which coat the surface of bacteria. The polypeptide is Surface-layer 125 kDa protein (Lysinibacillus sphaericus (Bacillus sphaericus)).